We begin with the raw amino-acid sequence, 209 residues long: Small ribosomal subunit protein uS3c (209 aa).

The region spanning 39-109 (IRSCIEKQLH…QIRINLIEIT (71 aa)) is the KH type-2 domain.

This sequence belongs to the universal ribosomal protein uS3 family. As to quaternary structure, part of the 30S ribosomal subunit.

Its subcellular location is the plastid. The protein localises to the chloroplast. The chain is Small ribosomal subunit protein uS3c (rps3) from Gracilaria tenuistipitata (Red alga).